The sequence spans 438 residues: Cell division cycle-associated 7-like protein (438 aa).

Positions 9–33 (IPKEVADIFSAPSDDEEFVGFQDDV) match the Integrase domain-binding motif 1 (IBM1) motif. Residue Ser-21 is modified to Phosphoserine. The tract at residues 56-115 (VCFRSKYFTEELRRIFKEDTDSEMEDFEGFTESELNMSSNPELMESELSDSDKAYPVMND) is PSIP1-binding. The Integrase domain-binding motif 2 (IBM2) signature appears at 63–89 (FTEELRRIFKEDTDSEMEDFEGFTESE). The disordered stretch occupies residues 74-199 (DTDSEMEDFE…ESRAESQENS (126 aa)). Thr-75 is modified (phosphothreonine). The span at 75-86 (TDSEMEDFEGFT) shows a compositional bias: acidic residues. Phosphoserine is present on Ser-77. Thr-86 carries the post-translational modification Phosphothreonine. 5 positions are modified to phosphoserine: Ser-101, Ser-104, Ser-135, Ser-136, and Ser-159. Positions 152-167 (RTPDKDSSHLLDSKTD) are enriched in basic and acidic residues. Residues 168–177 (LRRKKSSRQP) are compositionally biased toward basic residues. 2 positions are modified to phosphoserine: Ser-183 and Ser-185. The MYC-binding stretch occupies residues 201-223 (ALLKRAMNIKENKAMLAQLLAEL). Residues Lys-210 and Lys-213 each participate in a glycyl lysine isopeptide (Lys-Gly) (interchain with G-Cter in SUMO2) cross-link. Ser-249 bears the Phosphoserine mark.

As to quaternary structure, interacts with MYC. Interacts (via IBM motifs) with PSIP1 (via IBD domain); phosphorylation increases its affinity for PSIP1. In terms of processing, phosphorylation increases its interaction with PSIP1. In terms of tissue distribution, expressed in all tissues but not detected in total brain.

The protein localises to the cytoplasm. It is found in the nucleus. Functionally, plays a role in transcriptional regulation as a repressor that inhibits monoamine oxidase A (MAOA) activity and gene expression by binding to the promoter. Plays an important oncogenic role in mediating the full transforming effect of MYC in medulloblastoma cells. Involved in apoptotic signaling pathways; May act downstream of P38-kinase and BCL-2, but upstream of CASP3/caspase-3 as well as CCND1/cyclin D1 and E2F1. In Mus musculus (Mouse), this protein is Cell division cycle-associated 7-like protein (Cdca7l).